We begin with the raw amino-acid sequence, 379 residues long: Putative nickel insertion protein (379 aa).

Belongs to the LarC family.

This chain is Putative nickel insertion protein, found in Methanocaldococcus jannaschii (strain ATCC 43067 / DSM 2661 / JAL-1 / JCM 10045 / NBRC 100440) (Methanococcus jannaschii).